Reading from the N-terminus, the 382-residue chain is V-type proton ATPase subunit C 1 (382 aa).

Threonine 2 carries the post-translational modification N-acetylthreonine.

The protein belongs to the V-ATPase C subunit family. As to quaternary structure, V-ATPase is a heteromultimeric enzyme made up of two complexes: the ATP-hydrolytic V1 complex and the proton translocation V0 complex. The V1 complex consists of three catalytic AB heterodimers that form a heterohexamer, three peripheral stalks each consisting of EG heterodimers, one central rotor including subunits D and F, and the regulatory subunits C and H. The proton translocation complex V0 consists of the proton transport subunit a, a ring of proteolipid subunits c9c'', rotary subunit d, subunits e and f, and the accessory subunits ATP6AP1/Ac45 and ATP6AP2/PRR. Expressed in brain (at protein level).

The protein resides in the cytoplasmic vesicle. It localises to the secretory vesicle. It is found in the synaptic vesicle membrane. Its subcellular location is the clathrin-coated vesicle membrane. Functionally, subunit of the V1 complex of vacuolar(H+)-ATPase (V-ATPase), a multisubunit enzyme composed of a peripheral complex (V1) that hydrolyzes ATP and a membrane integral complex (V0) that translocates protons. V-ATPase is responsible for acidifying and maintaining the pH of intracellular compartments and in some cell types, is targeted to the plasma membrane, where it is responsible for acidifying the extracellular environment. Subunit C is necessary for the assembly of the catalytic sector of the enzyme and is likely to have a specific function in its catalytic activity. This chain is V-type proton ATPase subunit C 1 (Atp6v1c1), found in Rattus norvegicus (Rat).